A 489-amino-acid polypeptide reads, in one-letter code: Glycogen synthase (489 aa).

Arginine 20 provides a ligand contact to ADP-alpha-D-glucose.

This sequence belongs to the glycosyltransferase 1 family. Bacterial/plant glycogen synthase subfamily.

The catalysed reaction is [(1-&gt;4)-alpha-D-glucosyl](n) + ADP-alpha-D-glucose = [(1-&gt;4)-alpha-D-glucosyl](n+1) + ADP + H(+). It participates in glycan biosynthesis; glycogen biosynthesis. Functionally, synthesizes alpha-1,4-glucan chains using ADP-glucose. This chain is Glycogen synthase, found in Chlorobium luteolum (strain DSM 273 / BCRC 81028 / 2530) (Pelodictyon luteolum).